The chain runs to 255 residues: Tabinhibitin 1 (255 aa).

Residues 1–23 (MTSILVSRFLIAALVLQYATSDA) form the signal peptide. One can recognise an SCP domain in the interval 67–211 (LSKINDVRDH…KARALLTCNF (145 aa)).

Belongs to the CRISP family. As to expression, expressed in salivary glands.

It is found in the secreted. In terms of biological role, inhibits platelet aggregation induced by all agonists tested. May act by competing with fibrinogen for binding to glycoprotein IIb/IIIa (ITGA2B/ITGB3). The sequence is that of Tabinhibitin 1 from Tabanus yao (Horsefly).